We begin with the raw amino-acid sequence, 248 residues long: Probable phosphatase VFMJ11_A0091 (248 aa).

Zn(2+)-binding residues include His-8, His-10, His-16, His-41, Glu-74, His-102, His-132, Asp-194, and His-196.

Belongs to the PHP family. Zn(2+) serves as cofactor.

In Aliivibrio fischeri (strain MJ11) (Vibrio fischeri), this protein is Probable phosphatase VFMJ11_A0091.